A 255-amino-acid chain; its full sequence is MDDREDLVYQAKLAEQAERYDEMVESMKKVAGMDVELTVEERNLLSVAYKNVIGARRASWRIISSIEQKEENKGGEDKLKMIREYRQMVETELKLICCDILDVLDKHLIPAANTGESKVFYYKMKGDYHRYLAEFATGNDRKEAAENSLVAYKAASDIAMTELPPTHPIRLGLALNFSVFYYEILNSPDRACRLAKAAFDDAIAELDTLSEESYKDSTLIMQLLRDNLTLWTSDMQGDGEEQNKEALQDVEDENQ.

Met-1 is subject to N-acetylmethionine. At Lys-50 the chain carries N6-acetyllysine; alternate. Lys-50 is covalently cross-linked (Glycyl lysine isopeptide (Lys-Gly) (interchain with G-Cter in SUMO2); alternate). Ser-65 carries the phosphoserine modification. N6-acetyllysine is present on residues Lys-69, Lys-118, and Lys-123. Tyr-131 bears the Phosphotyrosine mark. Thr-137 carries the post-translational modification Phosphothreonine. A Phosphoserine modification is found at Ser-210. Phosphothreonine is present on Thr-232. Residues 234–255 form a disordered region; it reads DMQGDGEEQNKEALQDVEDENQ.

It belongs to the 14-3-3 family. Homodimer. Heterodimerizes with YWHAZ. Interacts with PKA-phosphorylated AANAT. Interacts with ABL1 (phosphorylated form); the interaction retains it in the cytoplasm. Interacts with ARHGEF28. Interacts with BEX3. Weakly interacts with CDKN1B. Interacts with the 'Thr-369' phosphorylated form of DAPK2. Interacts with DENND1A. Interacts with GAB2. Interacts with phosphorylated GRB10. Interacts with KSR1. Interacts with NDEL1. Interacts with PI4KB, TBC1D22A and TBC1D22B. Interacts with the phosphorylated (by AKT1) form of SRPK2. Interacts with TIAM2. Interacts with the 'Ser-1134' and 'Ser-1161' phosphorylated form of SOS1. Interacts with ZFP36 (via phosphorylated form). Interacts with SLITRK1. Interacts with HSF1 (via phosphorylated form); this interaction promotes HSF1 sequestration in the cytoplasm in a ERK-dependent manner. Interacts with RIPOR2. Interacts with KLHL22; required for the nuclear localization of KLHL22 upon amino acid starvation. Interacts with CRTC1. Interacts with CRTC2 (probably when phosphorylated at 'Ser-171'). Interacts with CRTC3 (probably when phosphorylated at 'Ser-162' and/or 'Ser-273'). Interacts with ATP2B1 and ATP2B3; this interaction inhibits calcium-transporting ATPase activity. Interacts with MEFV. Interacts with RNF115. Interacts with GPR15; this interaction promotes ER-to-Golgi transport of GPR15.

It localises to the nucleus. The protein resides in the cytoplasm. The protein localises to the melanosome. Adapter protein implicated in the regulation of a large spectrum of both general and specialized signaling pathways. Binds to a large number of partners, usually by recognition of a phosphoserine or phosphothreonine motif. Binding generally results in the modulation of the activity of the binding partner. Positively regulates phosphorylated protein HSF1 nuclear export to the cytoplasm. The polypeptide is 14-3-3 protein epsilon (Ywhae) (Rattus norvegicus (Rat)).